Here is a 436-residue protein sequence, read N- to C-terminus: UDP-N-acetylglucosamine 1-carboxyvinyltransferase (436 aa).

Position 22–23 (22–23) interacts with phosphoenolpyruvate; that stretch reads KN. Arginine 96 lines the UDP-N-acetyl-alpha-D-glucosamine pocket. Catalysis depends on cysteine 120, which acts as the Proton donor. Cysteine 120 bears the 2-(S-cysteinyl)pyruvic acid O-phosphothioketal mark. UDP-N-acetyl-alpha-D-glucosamine contacts are provided by residues 125–129, aspartate 309, and isoleucine 331; that span reads RPIDL.

Belongs to the EPSP synthase family. MurA subfamily.

It is found in the cytoplasm. The enzyme catalyses phosphoenolpyruvate + UDP-N-acetyl-alpha-D-glucosamine = UDP-N-acetyl-3-O-(1-carboxyvinyl)-alpha-D-glucosamine + phosphate. It functions in the pathway cell wall biogenesis; peptidoglycan biosynthesis. Cell wall formation. Adds enolpyruvyl to UDP-N-acetylglucosamine. In Acidobacterium capsulatum (strain ATCC 51196 / DSM 11244 / BCRC 80197 / JCM 7670 / NBRC 15755 / NCIMB 13165 / 161), this protein is UDP-N-acetylglucosamine 1-carboxyvinyltransferase.